A 97-amino-acid polypeptide reads, in one-letter code: Integration host factor subunit alpha (97 aa).

The tract at residues 49–71 is disordered; that stretch reads FGNFDLRDKNQRPGRNPKTGEDI.

This sequence belongs to the bacterial histone-like protein family. Heterodimer of an alpha and a beta chain.

Its function is as follows. This protein is one of the two subunits of integration host factor, a specific DNA-binding protein that functions in genetic recombination as well as in transcriptional and translational control. The protein is Integration host factor subunit alpha of Shewanella woodyi (strain ATCC 51908 / MS32).